We begin with the raw amino-acid sequence, 55 residues long: Large ribosomal subunit protein bL33 (55 aa).

The protein belongs to the bacterial ribosomal protein bL33 family.

The protein is Large ribosomal subunit protein bL33 of Phenylobacterium zucineum (strain HLK1).